Here is a 204-residue protein sequence, read N- to C-terminus: Ribosomal RNA small subunit methyltransferase G (204 aa).

S-adenosyl-L-methionine is bound by residues Gly-69, Phe-74, Ile-123–Glu-124, and Arg-137.

The protein belongs to the methyltransferase superfamily. RNA methyltransferase RsmG family.

It is found in the cytoplasm. It catalyses the reaction guanosine(527) in 16S rRNA + S-adenosyl-L-methionine = N(7)-methylguanosine(527) in 16S rRNA + S-adenosyl-L-homocysteine. Functionally, specifically methylates the N7 position of guanine in position 527 of 16S rRNA. The protein is Ribosomal RNA small subunit methyltransferase G of Ruegeria pomeroyi (strain ATCC 700808 / DSM 15171 / DSS-3) (Silicibacter pomeroyi).